A 153-amino-acid polypeptide reads, in one-letter code: Xanthine-guanine phosphoribosyltransferase (153 aa).

5-phospho-alpha-D-ribose 1-diphosphate-binding positions include 37 to 38 (RG) and 89 to 97 (DDLVDTGNT). Asp-90 contacts Mg(2+). Guanine is bound by residues Asp-93 and Ile-136. Xanthine-binding residues include Asp-93 and Ile-136. Residues 93-97 (DTGNT) and 135-136 (WI) contribute to the GMP site.

Belongs to the purine/pyrimidine phosphoribosyltransferase family. XGPT subfamily. As to quaternary structure, homotetramer. Requires Mg(2+) as cofactor.

Its subcellular location is the cell inner membrane. The enzyme catalyses GMP + diphosphate = guanine + 5-phospho-alpha-D-ribose 1-diphosphate. The catalysed reaction is XMP + diphosphate = xanthine + 5-phospho-alpha-D-ribose 1-diphosphate. It carries out the reaction IMP + diphosphate = hypoxanthine + 5-phospho-alpha-D-ribose 1-diphosphate. It participates in purine metabolism; GMP biosynthesis via salvage pathway; GMP from guanine: step 1/1. The protein operates within purine metabolism; XMP biosynthesis via salvage pathway; XMP from xanthine: step 1/1. Functionally, purine salvage pathway enzyme that catalyzes the transfer of the ribosyl-5-phosphate group from 5-phospho-alpha-D-ribose 1-diphosphate (PRPP) to the N9 position of the 6-oxopurines guanine and xanthine to form the corresponding ribonucleotides GMP (guanosine 5'-monophosphate) and XMP (xanthosine 5'-monophosphate), with the release of PPi. To a lesser extent, also acts on hypoxanthine. This chain is Xanthine-guanine phosphoribosyltransferase, found in Pasteurella multocida (strain Pm70).